A 549-amino-acid polypeptide reads, in one-letter code: Glutamyl-tRNA(Gln) amidotransferase subunit B, mitochondrial (549 aa).

A mitochondrion-targeting transit peptide spans 1 to 23; it reads MLRISRDTKIVARVTHVTKSRTY.

The protein belongs to the GatB/GatE family. GatB subfamily. As to quaternary structure, subunit of the heterotrimeric GatFAB amidotransferase (AdT) complex, composed of A, B and F subunits.

It is found in the mitochondrion. The enzyme catalyses L-glutamyl-tRNA(Gln) + L-glutamine + ATP + H2O = L-glutaminyl-tRNA(Gln) + L-glutamate + ADP + phosphate + H(+). Its function is as follows. Allows the formation of correctly charged Gln-tRNA(Gln) through the transamidation of misacylated Glu-tRNA(Gln) in the mitochondria. The reaction takes place in the presence of glutamine and ATP through an activated gamma-phospho-Glu-tRNA(Gln). The polypeptide is Glutamyl-tRNA(Gln) amidotransferase subunit B, mitochondrial (Yarrowia lipolytica (strain CLIB 122 / E 150) (Yeast)).